A 769-amino-acid chain; its full sequence is Multiple RNA-binding domain-containing protein 1 (769 aa).

The region spanning 24-102 (SRLIFLNLPS…GKVKVDFVKD (79 aa)) is the RRM 1 domain. 2 disordered regions span residues 105–139 (LKTG…NKRL) and 151–191 (PAMA…DDDA). Basic and acidic residues predominate over residues 165-178 (GTKKEKSVKGKEKS). The segment covering 179–191 (EEPEEAEADDDDA) has biased composition (acidic residues). RRM domains are found at residues 221 to 299 (SRLF…PGRA), 417 to 489 (TTIL…KGPV), and 535 to 618 (STLF…FAQR). A disordered region spans residues 617–637 (QRGAEDDRETKKGGDAEGGKT). Residues 619-636 (GAEDDRETKKGGDAEGGK) are compositionally biased toward basic and acidic residues. Residues 640 to 723 (TKVLVKNLPF…RHLVLQWANE (84 aa)) enclose the RRM 5 domain. Positions 740 to 769 (VRGMEDGGDRKRRKLDFKGGKEDEMDGLEV) are disordered.

The protein belongs to the RRM MRD1 family.

It localises to the nucleus. Functionally, involved in pre-rRNA processing. The polypeptide is Multiple RNA-binding domain-containing protein 1 (MRD1) (Cryptococcus neoformans var. neoformans serotype D (strain B-3501A) (Filobasidiella neoformans)).